Consider the following 382-residue polypeptide: Galactokinase (382 aa).

34–37 (EHTD) is a substrate binding site. Residue 124–130 (GAGLSSS) participates in ATP binding. Mg(2+)-binding residues include Ser130 and Glu162. Catalysis depends on Asp174, which acts as the Proton acceptor. A substrate-binding site is contributed by Tyr223.

This sequence belongs to the GHMP kinase family. GalK subfamily.

It is found in the cytoplasm. It carries out the reaction alpha-D-galactose + ATP = alpha-D-galactose 1-phosphate + ADP + H(+). The protein operates within carbohydrate metabolism; galactose metabolism. Its function is as follows. Catalyzes the transfer of the gamma-phosphate of ATP to D-galactose to form alpha-D-galactose-1-phosphate (Gal-1-P). The sequence is that of Galactokinase from Salmonella choleraesuis (strain SC-B67).